The sequence spans 120 residues: MNPSEIKKLRTESILKELIPEALANLDDENLKNLCVVDVECKKGRYDAFVYLDKMFFNVHEQEKILSSLKKASRALQNYCMSEQGWYRCPNFHFKFDDRLEYQNHMDALFEKIKKDKNES.

Belongs to the RbfA family. Monomer. Binds 30S ribosomal subunits, but not 50S ribosomal subunits or 70S ribosomes.

It localises to the cytoplasm. In terms of biological role, one of several proteins that assist in the late maturation steps of the functional core of the 30S ribosomal subunit. Associates with free 30S ribosomal subunits (but not with 30S subunits that are part of 70S ribosomes or polysomes). Required for efficient processing of 16S rRNA. May interact with the 5'-terminal helix region of 16S rRNA. The chain is Ribosome-binding factor A from Campylobacter jejuni subsp. jejuni serotype O:6 (strain 81116 / NCTC 11828).